The following is a 397-amino-acid chain: P2X purinoceptor 3 (397 aa).

Over 1 to 20 (MNCISDFFTYETTKSVVVKS) the chain is Cytoplasmic. Residues 21–43 (WTIGIINRAVQLLIISYFVGWVF) form a helical membrane-spanning segment. Topologically, residues 44–322 (LHEKAYQVRD…AGKFNIIPTI (279 aa)) are extracellular. ATP contacts are provided by lysine 63 and lysine 65. Disulfide bonds link cysteine 107–cysteine 153, cysteine 116–cysteine 137, and cysteine 122–cysteine 147. Glutamate 111 contacts Mg(2+). Asparagine 139 carries an N-linked (GlcNAc...) asparagine glycan. Residue aspartate 158 coordinates Mg(2+). Position 158 (aspartate 158) interacts with Ca(2+). Asparagine 170 carries an N-linked (GlcNAc...) asparagine glycan. ATP is bound at residue threonine 172. A glycan (N-linked (GlcNAc...) asparagine) is linked at asparagine 194. 2 disulfides stabilise this stretch: cysteine 203–cysteine 213 and cysteine 247–cysteine 256. ATP-binding residues include serine 275, asparagine 279, and arginine 281. A glycan (N-linked (GlcNAc...) asparagine) is linked at asparagine 290. Lysine 299 contacts ATP. A helical membrane pass occupies residues 323–341 (ISSVAAFTSVGVGTVLCDI). At 342-397 (ILLNFLKGADHYKARKFEEVTETTLKGTASTNPVFASDQATVEKQSTDSGAYSIGH) the chain is on the cytoplasmic side.

The protein belongs to the P2X receptor family. As to quaternary structure, homotrimer. Forms heterotrimer with P2RX2. Heterotrimeric P2RX2/3 has a ligand dose-response profile that is distinct from either homotrimeric P2RX2 or P2RX3. As to expression, selectively expressed in sensory ganglia.

The protein resides in the cell membrane. It catalyses the reaction Ca(2+)(in) = Ca(2+)(out). The catalysed reaction is Na(+)(in) = Na(+)(out). With respect to regulation, has high sensitivity to ATP. Fast activation by external ATP. Exhibits rapid desensitization. Sensitives to the ATP agonist:alpha/beta-methylene-ATP. Subject to allosteric inhibition by AF-219. Mg(2+) and Ca(2+) slow deactivation of P2RX3. Extracellular ATP-activated non-selective cation channel. Plays particularly important role in sensory neurons where its activation is critical for gustatory, nociceptive responses, visceral reflexes and sensory hypersensitization. The sequence is that of P2X purinoceptor 3 (P2rx3) from Rattus norvegicus (Rat).